Consider the following 478-residue polypeptide: Geranial dehydrogenase (478 aa).

Residue 230 to 235 participates in NAD(+) binding; sequence GSTSAG. E252 functions as the Proton acceptor in the catalytic mechanism. Catalysis depends on C286, which acts as the Nucleophile.

The protein belongs to the aldehyde dehydrogenase family.

The catalysed reaction is (2E)-geranial + NAD(+) + H2O = geranate + NADH + 2 H(+). It carries out the reaction perillyl aldehyde + NAD(+) + H2O = perillate + NADH + 2 H(+). It participates in terpene metabolism; monoterpene degradation. In terms of biological role, involved in the degradation of the monoterpenes beta-myrcene and limonene. During anaerobic degradation of beta-myrcene, catalyzes the NAD(+)-dependent oxidation of geranial to geranic acid. Seems to be specific for the trans-isomer geranial, since it does not act on the cis-isomer neral. During degradation of limonene, catalyzes the NAD(+)-dependent conversion of perillyl aldehyde to perrilic acid. The polypeptide is Geranial dehydrogenase (Castellaniella defragrans (strain DSM 12143 / CCUG 39792 / 65Phen) (Alcaligenes defragrans)).